A 305-amino-acid chain; its full sequence is GTPase Era (305 aa).

In terms of domain architecture, Era-type G spans R13–E181. The tract at residues G21–S28 is G1. GTP is bound at residue G21–S28. The tract at residues Q47–H51 is G2. The tract at residues D68 to G71 is G3. Residues D68–L72 and N130–D133 contribute to the GTP site. A G4 region spans residues N130–D133. A G5 region spans residues I160–A162. One can recognise a KH type-2 domain in the interval V204–G288.

Belongs to the TRAFAC class TrmE-Era-EngA-EngB-Septin-like GTPase superfamily. Era GTPase family. As to quaternary structure, monomer.

The protein resides in the cytoplasm. It localises to the cell inner membrane. Its function is as follows. An essential GTPase that binds both GDP and GTP, with rapid nucleotide exchange. Plays a role in 16S rRNA processing and 30S ribosomal subunit biogenesis and possibly also in cell cycle regulation and energy metabolism. The chain is GTPase Era from Pseudomonas aeruginosa (strain LESB58).